The chain runs to 403 residues: Argininosuccinate synthase (403 aa).

Residues 10 to 18 and Ala37 each bind ATP; that span reads AYSGGLDTS. Tyr89 is a binding site for L-citrulline. Gly119 is an ATP binding site. L-aspartate contacts are provided by Thr121, Asn125, and Asp126. Asn125 is a binding site for L-citrulline. The L-citrulline site is built by Arg129, Ser178, Ser187, Glu263, and Tyr275.

This sequence belongs to the argininosuccinate synthase family. Type 1 subfamily. Homotetramer.

It localises to the cytoplasm. The enzyme catalyses L-citrulline + L-aspartate + ATP = 2-(N(omega)-L-arginino)succinate + AMP + diphosphate + H(+). It functions in the pathway amino-acid biosynthesis; L-arginine biosynthesis; L-arginine from L-ornithine and carbamoyl phosphate: step 2/3. This is Argininosuccinate synthase from Idiomarina loihiensis (strain ATCC BAA-735 / DSM 15497 / L2-TR).